The following is a 439-amino-acid chain: Xylose isomerase (439 aa).

Catalysis depends on residues His101 and Asp104. Mg(2+)-binding residues include Glu232, Glu268, His271, Asp296, Asp307, Asp309, and Asp339.

Belongs to the xylose isomerase family. In terms of assembly, homotetramer. The cofactor is Mg(2+).

It localises to the cytoplasm. The enzyme catalyses alpha-D-xylose = alpha-D-xylulofuranose. The polypeptide is Xylose isomerase (Actinobacillus pleuropneumoniae serotype 5b (strain L20)).